An 82-amino-acid chain; its full sequence is Large ribosomal subunit protein uL29 (82 aa).

The protein belongs to the universal ribosomal protein uL29 family.

This is Large ribosomal subunit protein uL29 from Trichodesmium erythraeum (strain IMS101).